Reading from the N-terminus, the 676-residue chain is Maternal embryonic leucine zipper kinase (676 aa).

The Protein kinase domain occupies 13-265 (YEVYETIGSG…VKHLLDHPWV (253 aa)). ATP contacts are provided by residues 19–27 (IGSGGFAKV) and Lys-42. Residue Asp-134 is the Proton acceptor of the active site. Position 169 is a phosphothreonine; by autocatalysis (Thr-169). Residue Ser-173 is modified to Phosphoserine; by autocatalysis. The segment at 284 to 323 (IDEDCITEMAVTFKQSKQRTIQLVSEWKYDQITATYLLLL) is UBA-like. An autoinhibitory region region spans residues 328 to 673 (QGRPVRLRAE…VEDILSSSSQ (346 aa)). A compositionally biased stretch (basic and acidic residues) spans 423–443 (EHSRPCRQKPERRERTKENKE). The interval 423–518 (EHSRPCRQKP…QQNGQQGELN (96 aa)) is disordered. The span at 462-489 (TPTSSRKVKSNRTVMTTPNHNNNKSSEV) shows a compositional bias: polar residues. The segment covering 508-518 (QQQNGQQGELN) has biased composition (low complexity). One can recognise a KA1 domain in the interval 624-673 (SDFGKVTMQFELEVCLLQKPEVVGIRRQRLKGDAWVYKHLVEDILSSSSQ).

Belongs to the protein kinase superfamily. CAMK Ser/Thr protein kinase family. SNF1 subfamily. Post-translationally, autophosphorylated: autophosphorylation of the T-loop at Thr-169 and Ser-173 is required for activation. In terms of tissue distribution, strongly expressed in the eye, gill, kidney, spleen, muscle, ovary and testis and weakly in the heart, liver, and gut. Expressed in the brain and lateral mesoderm at 12 hours post-fertilization (hpf).

It is found in the cell membrane. The catalysed reaction is L-seryl-[protein] + ATP = O-phospho-L-seryl-[protein] + ADP + H(+). The enzyme catalyses L-threonyl-[protein] + ATP = O-phospho-L-threonyl-[protein] + ADP + H(+). Activated by autophosphorylation of the T-loop at Thr-169 and Ser-173: in contrast to other members of the SNF1 subfamily, phosphorylation at Thr-169 is not mediated by STK11/LKB1 but via autophosphorylation instead. Functionally, serine/threonine-protein kinase involved in various processes such as cell cycle regulation, self-renewal of stem cells, apoptosis and splicing regulation. Also plays a role in primitive hematopoiesis, possibly by affecting the expression of genes critical for hematopoiesis. The sequence is that of Maternal embryonic leucine zipper kinase (melk) from Danio rerio (Zebrafish).